We begin with the raw amino-acid sequence, 283 residues long: Protein BASIC PENTACYSTEINE1 (283 aa).

The segment at 111–170 is disordered; the sequence is RFEENPIPPPAPCEEQTGKKRKMRGSIATPTVPKAKKMRKPKEERDVTNNNVQQQQQRVK. Residues 158–169 are compositionally biased toward low complexity; sequence TNNNVQQQQQRV.

Belongs to the BBR/BPC family. As to expression, expressed in seedlings, leaves and pistils. Detected in the base of flowers and tips of carpels, in leaf and sepal vasculature, in young rosette, in the lateral and tip of primary roots, and in the whole ovule.

Its subcellular location is the nucleus. Its function is as follows. Transcriptional regulator that specifically binds to GA-rich elements (GAGA-repeats) present in regulatory sequences of genes involved in developmental processes. Negatively regulates the homeotic gene AGL11/STK, which controls ovule primordium identity, by a cooperative binding to purine-rich elements present in the regulatory sequence leading to DNA conformational changes. The protein is Protein BASIC PENTACYSTEINE1 (BPC1) of Arabidopsis thaliana (Mouse-ear cress).